A 275-amino-acid chain; its full sequence is Formamidopyrimidine-DNA glycosylase (275 aa).

The Schiff-base intermediate with DNA role is filled by proline 2. Glutamate 3 acts as the Proton donor in catalysis. The active-site Proton donor; for beta-elimination activity is lysine 59. Residues histidine 94 and arginine 113 each coordinate DNA. The FPG-type zinc finger occupies 241 to 275 (LVHTHAKEPCQICGTIIQKTKVNGRGTYYCPNCQN). Arginine 265 serves as the catalytic Proton donor; for delta-elimination activity.

Belongs to the FPG family. In terms of assembly, monomer. Zn(2+) serves as cofactor.

The enzyme catalyses Hydrolysis of DNA containing ring-opened 7-methylguanine residues, releasing 2,6-diamino-4-hydroxy-5-(N-methyl)formamidopyrimidine.. It carries out the reaction 2'-deoxyribonucleotide-(2'-deoxyribose 5'-phosphate)-2'-deoxyribonucleotide-DNA = a 3'-end 2'-deoxyribonucleotide-(2,3-dehydro-2,3-deoxyribose 5'-phosphate)-DNA + a 5'-end 5'-phospho-2'-deoxyribonucleoside-DNA + H(+). Its function is as follows. Involved in base excision repair of DNA damaged by oxidation or by mutagenic agents. Acts as a DNA glycosylase that recognizes and removes damaged bases. Has a preference for oxidized purines, such as 7,8-dihydro-8-oxoguanine (8-oxoG). Has AP (apurinic/apyrimidinic) lyase activity and introduces nicks in the DNA strand. Cleaves the DNA backbone by beta-delta elimination to generate a single-strand break at the site of the removed base with both 3'- and 5'-phosphates. The protein is Formamidopyrimidine-DNA glycosylase of Ureaplasma parvum serovar 3 (strain ATCC 700970).